A 264-amino-acid chain; its full sequence is Acyl-[acyl-carrier-protein]--UDP-N-acetylglucosamine O-acyltransferase (264 aa).

This sequence belongs to the transferase hexapeptide repeat family. LpxA subfamily. As to quaternary structure, homotrimer.

The protein localises to the cytoplasm. The enzyme catalyses a (3R)-hydroxyacyl-[ACP] + UDP-N-acetyl-alpha-D-glucosamine = a UDP-3-O-[(3R)-3-hydroxyacyl]-N-acetyl-alpha-D-glucosamine + holo-[ACP]. Its pathway is glycolipid biosynthesis; lipid IV(A) biosynthesis; lipid IV(A) from (3R)-3-hydroxytetradecanoyl-[acyl-carrier-protein] and UDP-N-acetyl-alpha-D-glucosamine: step 1/6. Its function is as follows. Involved in the biosynthesis of lipid A, a phosphorylated glycolipid that anchors the lipopolysaccharide to the outer membrane of the cell. The polypeptide is Acyl-[acyl-carrier-protein]--UDP-N-acetylglucosamine O-acyltransferase (Leptothrix cholodnii (strain ATCC 51168 / LMG 8142 / SP-6) (Leptothrix discophora (strain SP-6))).